A 253-amino-acid chain; its full sequence is Indole-3-glycerol phosphate synthase (253 aa).

The protein belongs to the TrpC family.

It carries out the reaction 1-(2-carboxyphenylamino)-1-deoxy-D-ribulose 5-phosphate + H(+) = (1S,2R)-1-C-(indol-3-yl)glycerol 3-phosphate + CO2 + H2O. Its pathway is amino-acid biosynthesis; L-tryptophan biosynthesis; L-tryptophan from chorismate: step 4/5. This is Indole-3-glycerol phosphate synthase from Bacillus thuringiensis (strain Al Hakam).